The primary structure comprises 247 residues: tRNA (guanine-N(1)-)-methyltransferase (247 aa).

S-adenosyl-L-methionine-binding positions include Gly-113 and 133–138 (IGDFVM).

Belongs to the RNA methyltransferase TrmD family. Homodimer.

It localises to the cytoplasm. The enzyme catalyses guanosine(37) in tRNA + S-adenosyl-L-methionine = N(1)-methylguanosine(37) in tRNA + S-adenosyl-L-homocysteine + H(+). Specifically methylates guanosine-37 in various tRNAs. This is tRNA (guanine-N(1)-)-methyltransferase from Vibrio campbellii (strain ATCC BAA-1116).